Here is a 55-residue protein sequence, read N- to C-terminus: Ribulose bisphosphate carboxylase large chain (55 aa).

Histidine 18 functions as the Proton acceptor in the catalytic mechanism. Substrate is bound by residues arginine 19 and histidine 27.

This sequence belongs to the RuBisCO large chain family. Type I subfamily. As to quaternary structure, heterohexadecamer of 8 large chains and 8 small chains; disulfide-linked. The disulfide link is formed within the large subunit homodimers. Mg(2+) is required as a cofactor. In terms of processing, the disulfide bond which can form in the large chain dimeric partners within the hexadecamer appears to be associated with oxidative stress and protein turnover.

The protein localises to the plastid. The protein resides in the chloroplast. The catalysed reaction is 2 (2R)-3-phosphoglycerate + 2 H(+) = D-ribulose 1,5-bisphosphate + CO2 + H2O. It catalyses the reaction D-ribulose 1,5-bisphosphate + O2 = 2-phosphoglycolate + (2R)-3-phosphoglycerate + 2 H(+). Functionally, ruBisCO catalyzes two reactions: the carboxylation of D-ribulose 1,5-bisphosphate, the primary event in carbon dioxide fixation, as well as the oxidative fragmentation of the pentose substrate in the photorespiration process. Both reactions occur simultaneously and in competition at the same active site. This is Ribulose bisphosphate carboxylase large chain from Vitis sp. (Grape).